Reading from the N-terminus, the 266-residue chain is 3-methyl-2-oxobutanoate hydroxymethyltransferase (266 aa).

Residues Asp45 and Asp84 each contribute to the Mg(2+) site. 3-methyl-2-oxobutanoate is bound by residues 45–46 (DS), Asp84, and Lys112. Glu114 is a Mg(2+) binding site. The active-site Proton acceptor is the Glu181.

The protein belongs to the PanB family. As to quaternary structure, homodecamer; pentamer of dimers. The cofactor is Mg(2+).

It is found in the cytoplasm. It catalyses the reaction 3-methyl-2-oxobutanoate + (6R)-5,10-methylene-5,6,7,8-tetrahydrofolate + H2O = 2-dehydropantoate + (6S)-5,6,7,8-tetrahydrofolate. Its pathway is cofactor biosynthesis; (R)-pantothenate biosynthesis; (R)-pantoate from 3-methyl-2-oxobutanoate: step 1/2. In terms of biological role, catalyzes the reversible reaction in which hydroxymethyl group from 5,10-methylenetetrahydrofolate is transferred onto alpha-ketoisovalerate to form ketopantoate. This chain is 3-methyl-2-oxobutanoate hydroxymethyltransferase, found in Pseudomonas fluorescens (strain SBW25).